We begin with the raw amino-acid sequence, 602 residues long: Prostaglandin G/H synthase 1 (602 aa).

Positions 1–26 (MSRRSLSLWFPLLLLLLLPPTPSVLL) are cleaved as a signal peptide. In terms of domain architecture, EGF-like spans 34-72 (PVNPCCYYPCQNQGVCVRFGLDNYQCDCTRTGYSGPNCT). Intrachain disulfides connect C38–C49, C39–C161, C43–C59, and C61–C71. Residues N70, N106, and N146 are each glycosylated (N-linked (GlcNAc...) asparagine). The Proton acceptor role is filled by H209. Y387 (for cyclooxygenase activity) is an active-site residue. Heme b is bound at residue H390. C571 and C577 form a disulfide bridge.

Belongs to the prostaglandin G/H synthase family. In terms of assembly, homodimer. Requires heme b as cofactor.

It is found in the microsome membrane. It localises to the endoplasmic reticulum membrane. The enzyme catalyses (5Z,8Z,11Z,14Z)-eicosatetraenoate + AH2 + 2 O2 = prostaglandin H2 + A + H2O. It catalyses the reaction (5Z,8Z,11Z,14Z)-eicosatetraenoate + 2 O2 = prostaglandin G2. The catalysed reaction is prostaglandin G2 + AH2 = prostaglandin H2 + A + H2O. It carries out the reaction (9Z,12Z)-octadecadienoate + AH2 + O2 = (9R)-hydroxy-(10E,12Z)-octadecadienoate + A + H2O. The enzyme catalyses (9Z,12Z)-octadecadienoate + AH2 + O2 = (9S)-hydroxy-(10E,12Z)-octadecadienoate + A + H2O. It catalyses the reaction (9Z,12Z)-octadecadienoate + AH2 + O2 = (13S)-hydroxy-(9Z,11E)-octadecadienoate + A + H2O. The catalysed reaction is (9Z,12Z)-octadecadienoate + AH2 + O2 = (13R)-hydroxy-(9Z,11E)-octadecadienoate + A + H2O. Its pathway is lipid metabolism; prostaglandin biosynthesis. The cyclooxygenase activity is inhibited by nonsteroidal anti-inflammatory drugs (NSAIDs) including ibuprofen, flurbiprofen, ketoprofen, naproxen, flurbiprofen, anirolac, fenclofenac and diclofenac. In terms of biological role, dual cyclooxygenase and peroxidase that plays an important role in the biosynthesis pathway of prostanoids, a class of C20 oxylipins mainly derived from arachidonate ((5Z,8Z,11Z,14Z)-eicosatetraenoate, AA, C20:4(n-6)), with a particular role in the inflammatory response. The cyclooxygenase activity oxygenates AA to the hydroperoxy endoperoxide prostaglandin G2 (PGG2), and the peroxidase activity reduces PGG2 to the hydroxy endoperoxide prostaglandin H2 (PGH2), the precursor of all 2-series prostaglandins and thromboxanes. This complex transformation is initiated by abstraction of hydrogen at carbon 13 (with S-stereochemistry), followed by insertion of molecular O2 to form the endoperoxide bridge between carbon 9 and 11 that defines prostaglandins. The insertion of a second molecule of O2 (bis-oxygenase activity) yields a hydroperoxy group in PGG2 that is then reduced to PGH2 by two electrons. Involved in the constitutive production of prostanoids in particular in the stomach and platelets. In gastric epithelial cells, it is a key step in the generation of prostaglandins, such as prostaglandin E2 (PGE2), which plays an important role in cytoprotection. In platelets, it is involved in the generation of thromboxane A2 (TXA2), which promotes platelet activation and aggregation, vasoconstriction and proliferation of vascular smooth muscle cells. Can also use linoleate (LA, (9Z,12Z)-octadecadienoate, C18:2(n-6)) as substrate and produce hydroxyoctadecadienoates (HODEs) in a regio- and stereospecific manner, being (9R)-HODE ((9R)-hydroxy-(10E,12Z)-octadecadienoate) and (13S)-HODE ((13S)-hydroxy-(9Z,11E)-octadecadienoate) its major products. This Mus musculus (Mouse) protein is Prostaglandin G/H synthase 1.